A 371-amino-acid polypeptide reads, in one-letter code: 4-hydroxy-3-methylbut-2-en-1-yl diphosphate synthase (flavodoxin) (371 aa).

The [4Fe-4S] cluster site is built by C270, C273, C305, and E312.

Belongs to the IspG family. [4Fe-4S] cluster is required as a cofactor.

It catalyses the reaction (2E)-4-hydroxy-3-methylbut-2-enyl diphosphate + oxidized [flavodoxin] + H2O + 2 H(+) = 2-C-methyl-D-erythritol 2,4-cyclic diphosphate + reduced [flavodoxin]. Its pathway is isoprenoid biosynthesis; isopentenyl diphosphate biosynthesis via DXP pathway; isopentenyl diphosphate from 1-deoxy-D-xylulose 5-phosphate: step 5/6. Its function is as follows. Converts 2C-methyl-D-erythritol 2,4-cyclodiphosphate (ME-2,4cPP) into 1-hydroxy-2-methyl-2-(E)-butenyl 4-diphosphate. In Shewanella halifaxensis (strain HAW-EB4), this protein is 4-hydroxy-3-methylbut-2-en-1-yl diphosphate synthase (flavodoxin).